The chain runs to 82 residues: Protein costars (82 aa).

It belongs to the costars family.

Modulates actin dynamics and cell motility. In Dictyostelium discoideum (Social amoeba), this protein is Protein costars (cosA).